The following is a 93-amino-acid chain: UPF0367 protein tsr0804 (93 aa).

Belongs to the UPF0367 family.

This is UPF0367 protein tsr0804 from Thermosynechococcus vestitus (strain NIES-2133 / IAM M-273 / BP-1).